The following is a 93-amino-acid chain: Pyrimidine/purine nucleoside phosphorylase (93 aa).

It belongs to the nucleoside phosphorylase PpnP family.

It catalyses the reaction a purine D-ribonucleoside + phosphate = a purine nucleobase + alpha-D-ribose 1-phosphate. The catalysed reaction is adenosine + phosphate = alpha-D-ribose 1-phosphate + adenine. The enzyme catalyses cytidine + phosphate = cytosine + alpha-D-ribose 1-phosphate. It carries out the reaction guanosine + phosphate = alpha-D-ribose 1-phosphate + guanine. It catalyses the reaction inosine + phosphate = alpha-D-ribose 1-phosphate + hypoxanthine. The catalysed reaction is thymidine + phosphate = 2-deoxy-alpha-D-ribose 1-phosphate + thymine. The enzyme catalyses uridine + phosphate = alpha-D-ribose 1-phosphate + uracil. It carries out the reaction xanthosine + phosphate = alpha-D-ribose 1-phosphate + xanthine. Catalyzes the phosphorolysis of diverse nucleosides, yielding D-ribose 1-phosphate and the respective free bases. Can use uridine, adenosine, guanosine, cytidine, thymidine, inosine and xanthosine as substrates. Also catalyzes the reverse reactions. The chain is Pyrimidine/purine nucleoside phosphorylase from Aliivibrio salmonicida (strain LFI1238) (Vibrio salmonicida (strain LFI1238)).